The primary structure comprises 327 residues: Probable cell division protein WhiA (327 aa).

The segment at residues 275–308 (SLEELGRLADPPMTKDAVAGRIRRLLSMADRKAK) is a DNA-binding region (H-T-H motif). The interval 304–327 (DRKAKQDGIPDTESAVTPDLLEDA) is disordered.

It belongs to the WhiA family.

In terms of biological role, involved in cell division and chromosome segregation. This Mycolicibacterium gilvum (strain PYR-GCK) (Mycobacterium gilvum (strain PYR-GCK)) protein is Probable cell division protein WhiA.